The sequence spans 439 residues: tRNA-2-methylthio-N(6)-dimethylallyladenosine synthase (439 aa).

The MTTase N-terminal domain occupies 2-116 (LKVYIETMGC…ISQVIHKEKA (115 aa)). [4Fe-4S] cluster is bound by residues cysteine 11, cysteine 47, cysteine 79, cysteine 149, cysteine 153, and cysteine 156. Positions 135 to 368 (KKAEVRSLLN…QNRHKEILEE (234 aa)) constitute a Radical SAM core domain. The region spanning 371–437 (RLEVGKTHVV…KGRLMATTKN (67 aa)) is the TRAM domain.

Belongs to the methylthiotransferase family. MiaB subfamily. In terms of assembly, monomer. [4Fe-4S] cluster serves as cofactor.

It localises to the cytoplasm. The enzyme catalyses N(6)-dimethylallyladenosine(37) in tRNA + (sulfur carrier)-SH + AH2 + 2 S-adenosyl-L-methionine = 2-methylsulfanyl-N(6)-dimethylallyladenosine(37) in tRNA + (sulfur carrier)-H + 5'-deoxyadenosine + L-methionine + A + S-adenosyl-L-homocysteine + 2 H(+). Functionally, catalyzes the methylthiolation of N6-(dimethylallyl)adenosine (i(6)A), leading to the formation of 2-methylthio-N6-(dimethylallyl)adenosine (ms(2)i(6)A) at position 37 in tRNAs that read codons beginning with uridine. The sequence is that of tRNA-2-methylthio-N(6)-dimethylallyladenosine synthase from Helicobacter acinonychis (strain Sheeba).